The sequence spans 313 residues: Formimidoylglutamase (313 aa).

Mn(2+) contacts are provided by His130, Asp155, His157, Asp159, Asp241, and Asp243.

Belongs to the arginase family. Mn(2+) is required as a cofactor.

It catalyses the reaction N-formimidoyl-L-glutamate + H2O = formamide + L-glutamate. It functions in the pathway amino-acid degradation; L-histidine degradation into L-glutamate; L-glutamate from N-formimidoyl-L-glutamate (hydrolase route): step 1/1. Catalyzes the conversion of N-formimidoyl-L-glutamate to L-glutamate and formamide. This Salmonella choleraesuis (strain SC-B67) protein is Formimidoylglutamase.